The sequence spans 461 residues: V-type ATP synthase beta chain (461 aa).

This sequence belongs to the ATPase alpha/beta chains family.

In terms of biological role, produces ATP from ADP in the presence of a proton gradient across the membrane. The V-type beta chain is a regulatory subunit. The polypeptide is V-type ATP synthase beta chain (Clostridium botulinum (strain Kyoto / Type A2)).